Reading from the N-terminus, the 135-residue chain is Flagellar assembly factor FliW 1 (135 aa).

It belongs to the FliW family. Interacts with translational regulator CsrA and flagellin(s).

Its subcellular location is the cytoplasm. Acts as an anti-CsrA protein, binds CsrA and prevents it from repressing translation of its target genes, one of which is flagellin. Binds to flagellin and participates in the assembly of the flagellum. The chain is Flagellar assembly factor FliW 1 from Helicobacter pylori (strain HPAG1).